A 301-amino-acid chain; its full sequence is Mitochondrial ornithine transporter 1 (301 aa).

Transmembrane regions (helical) follow at residues 5–25 (PAIQAAIDLTAGAAGGTACVL), 68–88 (SPALIANIAENSVLFMCYGFC), 110–130 (AAAGSFASAFAALVLCPTELV), 168–188 (GFYHGLSSTLLREVPGYFFFF), 207–227 (LGPIPLMLSGGFGGICLWLAV), and 237–257 (IQVLSMTGKQTGLIRTFLSIV). Solcar repeat units follow at residues 7–91 (IQAA…CQQV), 104–197 (LSDL…SRSF), and 207–293 (LGPI…SRKL).

This sequence belongs to the mitochondrial carrier (TC 2.A.29) family. As to expression, expressed in the liver (at protein level).

The protein resides in the mitochondrion inner membrane. Its subcellular location is the mitochondrion membrane. The enzyme catalyses L-citrulline(in) + L-ornithine(out) + H(+)(in) = L-citrulline(out) + L-ornithine(in) + H(+)(out). It carries out the reaction L-ornithine(in) + L-arginine(out) = L-ornithine(out) + L-arginine(in). It catalyses the reaction L-ornithine(out) + L-lysine(in) = L-ornithine(in) + L-lysine(out). The catalysed reaction is L-ornithine(out) + H(+)(in) = L-ornithine(in) + H(+)(out). The enzyme catalyses L-lysine(out) + H(+)(in) = L-lysine(in) + H(+)(out). With respect to regulation, inhibited by pyridoxal 5'-phosphate as well as by mercurials (mersalyl, p-chloromercuribenzene sulfonate, and mercuric chloride), N-ethylmaleimide and spermine. Functionally, mitochondrial ornithine-citrulline antiporter. Catalyzes the exchange between cytosolic ornithine and mitochondrial citrulline plus an H(+), the proton compensates the positive charge of ornithine thus leading to an electroneutral transport. Plays a crucial role in the urea cycle, by connecting the cytosolic and the intramitochondrial reactions of the urea cycle. Lysine and arginine are also transported by the antiport mechanism. In addition, catalyzes an electroneutral exchange of ornithine or lysine for H(+), a reaction driven by the pH gradient across the inner membrane. The polypeptide is Mitochondrial ornithine transporter 1 (Slc25a15) (Rattus norvegicus (Rat)).